The chain runs to 444 residues: ATP-dependent protease ATPase subunit HslU (444 aa).

ATP-binding positions include Ile20 and 62-67; that span reads GVGKTE. Positions 130–158 are disordered; the sequence is EDRILDALVPPPRGASGEPERGEDNSARQ. Residues Asp257, Glu322, and Arg394 each coordinate ATP.

Belongs to the ClpX chaperone family. HslU subfamily. In terms of assembly, a double ring-shaped homohexamer of HslV is capped on each side by a ring-shaped HslU homohexamer. The assembly of the HslU/HslV complex is dependent on binding of ATP.

The protein resides in the cytoplasm. ATPase subunit of a proteasome-like degradation complex; this subunit has chaperone activity. The binding of ATP and its subsequent hydrolysis by HslU are essential for unfolding of protein substrates subsequently hydrolyzed by HslV. HslU recognizes the N-terminal part of its protein substrates and unfolds these before they are guided to HslV for hydrolysis. This is ATP-dependent protease ATPase subunit HslU from Bordetella bronchiseptica (strain ATCC BAA-588 / NCTC 13252 / RB50) (Alcaligenes bronchisepticus).